A 174-amino-acid polypeptide reads, in one-letter code: ATP-dependent protease subunit HslV (174 aa).

Threonine 2 is a catalytic residue. Na(+)-binding residues include glycine 157, cysteine 160, and threonine 163.

Belongs to the peptidase T1B family. HslV subfamily. A double ring-shaped homohexamer of HslV is capped on each side by a ring-shaped HslU homohexamer. The assembly of the HslU/HslV complex is dependent on binding of ATP.

The protein resides in the cytoplasm. The enzyme catalyses ATP-dependent cleavage of peptide bonds with broad specificity.. Its activity is regulated as follows. Allosterically activated by HslU binding. Functionally, protease subunit of a proteasome-like degradation complex believed to be a general protein degrading machinery. In Yersinia enterocolitica serotype O:8 / biotype 1B (strain NCTC 13174 / 8081), this protein is ATP-dependent protease subunit HslV.